We begin with the raw amino-acid sequence, 1519 residues long: Dicer-like protein 1 (1519 aa).

Positions 1–13 (MTHQNTETASLAT) are enriched in polar residues. The segment at 1–62 (MTHQNTETAS…KDPSQRQRQQ (62 aa)) is disordered. Residues 39 to 48 (SDESEGSEEE) show a composition bias toward acidic residues. The Helicase ATP-binding domain occupies 116-297 (LFERAKVQNT…EAARNLEALL (182 aa)). 129–136 (LDTGSGKT) is an ATP binding site. The short motif at 242–245 (DEAH) is the DEAH box element. One can recognise a Helicase C-terminal domain in the interval 431–601 (ALSSKVRVLW…QLLPEDRILH (171 aa)). The Dicer dsRNA-binding fold domain maps to 634-724 (AITVLARYAS…NSVYHRRLPA (91 aa)). One can recognise a PAZ domain in the interval 882–1001 (DDIEYQADMP…ICIEPLKISA (120 aa)). 2 RNase III domains span residues 1026–1184 (GLEA…LTPG) and 1235–1387 (CRRV…VDSN). Mg(2+) contacts are provided by E1275, D1373, and E1376. In terms of domain architecture, DRBM spans 1421-1489 (TFLHNKLTNE…SENALTELLH (69 aa)). 4 residues coordinate Zn(2+): C1433, H1460, C1501, and C1503.

It belongs to the helicase family. Dicer subfamily. Requires Mg(2+) as cofactor. Mn(2+) is required as a cofactor.

In terms of biological role, dicer-like endonuclease involved in cleaving double-stranded RNA in the RNA interference (RNAi) pathway. Produces 21 to 25 bp dsRNAs (siRNAs) which target the selective destruction of homologous RNAs leading to sequence-specific suppression of gene expression, called post-transcriptional gene silencing (PTGS). Part of a broad host defense response against viral infection and transposons. The chain is Dicer-like protein 1 (dcl1) from Aspergillus terreus (strain NIH 2624 / FGSC A1156).